The primary structure comprises 403 residues: 3-hydroxy-3-methylglutaryl-coenzyme A reductase (403 aa).

Active-site charge relay system residues include E99 and D303. Catalysis depends on H398, which acts as the Proton donor.

Belongs to the HMG-CoA reductase family.

It carries out the reaction (R)-mevalonate + 2 NADP(+) + CoA = (3S)-3-hydroxy-3-methylglutaryl-CoA + 2 NADPH + 2 H(+). The protein operates within metabolic intermediate biosynthesis; (R)-mevalonate biosynthesis; (R)-mevalonate from acetyl-CoA: step 3/3. Its activity is regulated as follows. Is competitively inhibited by (R)-HMG-CoA and lovastatin (formerly called mevinolin). In terms of biological role, catalyzes the NADPH-dependent reductive deacylation of (S)-3-hydroxy-3-methylglutaryl-CoA (HMG-CoA) to (R)-mevalonate. Functions in the mevalonate (MVA) pathway leading to isopentenyl diphosphate (IPP), a key precursor for the biosynthesis of isoprenoid compounds such as archaeal membrane lipids. Is also able to catalyze the reduction of mevaldehyde to mevalonate and the oxidative acylation of mevaldehyde to HMG-CoA. The polypeptide is 3-hydroxy-3-methylglutaryl-coenzyme A reductase (hmgA) (Haloferax volcanii (strain ATCC 29605 / DSM 3757 / JCM 8879 / NBRC 14742 / NCIMB 2012 / VKM B-1768 / DS2) (Halobacterium volcanii)).